Reading from the N-terminus, the 272-residue chain is Shikimate dehydrogenase (NADP(+)) (272 aa).

Shikimate contacts are provided by residues 14-16 (SKS) and threonine 61. Lysine 65 serves as the catalytic Proton acceptor. Glutamate 77 contacts NADP(+). Positions 86 and 102 each coordinate shikimate. NADP(+)-binding positions include 126–130 (GAGGA), 149–154 (NRTASR), and methionine 213. Shikimate is bound at residue tyrosine 215. Residue glycine 237 coordinates NADP(+).

The protein belongs to the shikimate dehydrogenase family. In terms of assembly, homodimer.

It carries out the reaction shikimate + NADP(+) = 3-dehydroshikimate + NADPH + H(+). The protein operates within metabolic intermediate biosynthesis; chorismate biosynthesis; chorismate from D-erythrose 4-phosphate and phosphoenolpyruvate: step 4/7. Involved in the biosynthesis of the chorismate, which leads to the biosynthesis of aromatic amino acids. Catalyzes the reversible NADPH linked reduction of 3-dehydroshikimate (DHSA) to yield shikimate (SA). This chain is Shikimate dehydrogenase (NADP(+)), found in Salmonella choleraesuis (strain SC-B67).